A 153-amino-acid chain; its full sequence is Nucleoside diphosphate kinase (153 aa).

Residue alanine 2 is modified to N-acetylalanine. ATP contacts are provided by lysine 13, phenylalanine 61, arginine 89, threonine 95, arginine 106, and asparagine 116. Catalysis depends on histidine 119, which acts as the Pros-phosphohistidine intermediate. Serine 126 is subject to Phosphoserine.

It belongs to the NDK family. As to quaternary structure, homohexamer. It depends on Mg(2+) as a cofactor.

It is found in the cytoplasm. It localises to the cytoskeleton. The enzyme catalyses a 2'-deoxyribonucleoside 5'-diphosphate + ATP = a 2'-deoxyribonucleoside 5'-triphosphate + ADP. The catalysed reaction is a ribonucleoside 5'-diphosphate + ATP = a ribonucleoside 5'-triphosphate + ADP. Major role in the synthesis of nucleoside triphosphates other than ATP. The ATP gamma phosphate is transferred to the NDP beta phosphate via a ping-pong mechanism, using a phosphorylated active-site intermediate. In Drosophila melanogaster (Fruit fly), this protein is Nucleoside diphosphate kinase (awd).